The sequence spans 876 residues: Valine--tRNA ligase (876 aa).

Residues 44–54 carry the 'HIGH' region motif; sequence PNVTGKLHLGH. The short motif at 520–524 is the 'KMSKS' region element; that stretch reads KMSKS. Position 523 (K523) interacts with ATP. Residues 805-876 are a coiled coil; the sequence is LEGLIDMDKE…VKARIEQLKA (72 aa).

The protein belongs to the class-I aminoacyl-tRNA synthetase family. ValS type 1 subfamily. As to quaternary structure, monomer.

It is found in the cytoplasm. It catalyses the reaction tRNA(Val) + L-valine + ATP = L-valyl-tRNA(Val) + AMP + diphosphate. Its function is as follows. Catalyzes the attachment of valine to tRNA(Val). As ValRS can inadvertently accommodate and process structurally similar amino acids such as threonine, to avoid such errors, it has a 'posttransfer' editing activity that hydrolyzes mischarged Thr-tRNA(Val) in a tRNA-dependent manner. This is Valine--tRNA ligase from Staphylococcus aureus (strain Mu3 / ATCC 700698).